A 90-amino-acid polypeptide reads, in one-letter code: c-Myc-binding protein homolog (90 aa).

It belongs to the AMY1 family.

The protein resides in the nucleus. The polypeptide is c-Myc-binding protein homolog (mycbp) (Dictyostelium discoideum (Social amoeba)).